The following is a 549-amino-acid chain: Oxygen-dependent choline dehydrogenase (549 aa).

Asp4–Glu33 lines the FAD pocket. His465 serves as the catalytic Proton acceptor. The interval Lys528–Arg549 is disordered.

It belongs to the GMC oxidoreductase family. It depends on FAD as a cofactor.

The enzyme catalyses choline + A = betaine aldehyde + AH2. It carries out the reaction betaine aldehyde + NAD(+) + H2O = glycine betaine + NADH + 2 H(+). Its pathway is amine and polyamine biosynthesis; betaine biosynthesis via choline pathway; betaine aldehyde from choline (cytochrome c reductase route): step 1/1. Its function is as follows. Involved in the biosynthesis of the osmoprotectant glycine betaine. Catalyzes the oxidation of choline to betaine aldehyde and betaine aldehyde to glycine betaine at the same rate. This is Oxygen-dependent choline dehydrogenase from Agrobacterium fabrum (strain C58 / ATCC 33970) (Agrobacterium tumefaciens (strain C58)).